The sequence spans 666 residues: Putative cysteine-rich receptor-like protein kinase 20 (666 aa).

Residues 1-23 (MSSLICFIFLFLFSFITSFTASA) form the signal peptide. The Extracellular portion of the chain corresponds to 24–264 (QNPFYLYHNC…PRPGKGGNSS (241 aa)). Gnk2-homologous domains are found at residues 27 to 131 (FYLY…NRNI) and 137 to 241 (TDGG…NYEF). Asn32, Asn42, Asn60, Asn69, and Asn103 each carry an N-linked (GlcNAc...) asparagine glycan. N-linked (GlcNAc...) asparagine glycosylation occurs at Asn262. Residues 265 to 285 (VIVIAVVVPITVLFLLFVAFF) traverse the membrane as a helical segment. Over 286 to 666 (SVRRAKRKKT…EASITSVAPR (381 aa)) the chain is Cytoplasmic. The region spanning 344–623 (FLPINKLGQG…QMLTTSSIAL (280 aa)) is the Protein kinase domain. Residues 350 to 358 (LGQGGFGEV) and Lys372 each bind ATP. Tyr417 is modified (phosphotyrosine). The active-site Proton acceptor is the Asp469. Residue Thr509 is modified to Phosphothreonine. At Tyr517 the chain carries Phosphotyrosine.

The protein belongs to the protein kinase superfamily. Ser/Thr protein kinase family. CRK subfamily.

It localises to the membrane. The enzyme catalyses L-seryl-[protein] + ATP = O-phospho-L-seryl-[protein] + ADP + H(+). It catalyses the reaction L-threonyl-[protein] + ATP = O-phospho-L-threonyl-[protein] + ADP + H(+). The sequence is that of Putative cysteine-rich receptor-like protein kinase 20 (CRK20) from Arabidopsis thaliana (Mouse-ear cress).